Here is a 563-residue protein sequence, read N- to C-terminus: Membrane protein insertase YidC (563 aa).

Residues 6–26 traverse the membrane as a helical segment; the sequence is TILWMIFSFSLLLLWNNWQIH. Positions 36-68 are disordered; that stretch reads PPASSAASPAEGQQAAANGQAATPSVPTTPAAA. 4 helical membrane-spanning segments follow: residues 373 to 393, 443 to 463, 482 to 502, and 512 to 532; these read WGWA…PLAA, LPMV…LASV, PYFI…KLNP, and VMMI…AGLV.

It belongs to the OXA1/ALB3/YidC family. Type 1 subfamily. Interacts with the Sec translocase complex via SecD. Specifically interacts with transmembrane segments of nascent integral membrane proteins during membrane integration.

It is found in the cell inner membrane. Its function is as follows. Required for the insertion and/or proper folding and/or complex formation of integral membrane proteins into the membrane. Involved in integration of membrane proteins that insert both dependently and independently of the Sec translocase complex, as well as at least some lipoproteins. Aids folding of multispanning membrane proteins. This is Membrane protein insertase YidC from Bordetella petrii (strain ATCC BAA-461 / DSM 12804 / CCUG 43448).